The primary structure comprises 300 residues: Free fatty acid receptor 1 (300 aa).

Residues 1 to 8 (MALSPQLF) are Extracellular-facing. Residues 9-31 (FALYVSAFALGFPLNLLAIRGAV) form a helical membrane-spanning segment. At 32 to 41 (ARARLRLTPN) the chain is on the cytoplasmic side. A helical transmembrane segment spans residues 42–64 (LVYTLHLACSDLLLAITLPVKAV). Over 65 to 79 (EALASGAWPLPLPLC) the chain is Extracellular. An intrachain disulfide couples Cys-79 to Cys-170. A helical transmembrane segment spans residues 80-101 (PVFVLVHFAPLYAGGGFLAALS). The Cytoplasmic segment spans residues 102 to 121 (AGRYLGAAFPFGYQAVRRPR). Residues 122–142 (YSWGVCVAIWALVLCHMGLVL) traverse the membrane as a helical segment. Residues 143–178 (GLEAPGGWLNTTSSSLGINTPVNGSPVCLEAWDPNS) are Extracellular-facing. Asn-152 carries an N-linked (GlcNAc...) asparagine glycan. The helical transmembrane segment at 179-200 (ARPARLSFSILLFFVPLVITAF) threads the bilayer. The Cytoplasmic portion of the chain corresponds to 201–223 (CYVGCLRALAHSGLSHKRKLRAA). A helical membrane pass occupies residues 224–248 (WAAGGAFLTLLLCLGPYNASNVASF). Topologically, residues 249–256 (VNPDLGGS) are extracellular. The helical transmembrane segment at 257–279 (WRKLGLITGSWSVVLNPLVTGYL) threads the bilayer. Residues 280–300 (GASPGRGTVCTTRTQGGTIQK) lie on the Cytoplasmic side of the membrane.

Belongs to the G-protein coupled receptor 1 family.

It is found in the cell membrane. Its function is as follows. G-protein coupled receptor for medium and long chain saturated and unsaturated fatty acids that plays an important role in glucose homeostasis. Fatty acid binding increases glucose-stimulated insulin secretion, and may also enhance the secretion of glucagon-like peptide 1 (GLP-1). May also play a role in bone homeostasis; receptor signaling activates pathways that inhibit osteoclast differentiation. Ligand binding leads to a conformation change that triggers signaling via G-proteins that activate phospholipase C, leading to an increase of the intracellular calcium concentration. Seems to act through a G(q) and G(i)-mediated pathway. Mediates the anti-inflammatory effects of omega-3 polyunsaturated fatty acids (PUFAs) via inhibition of NLRP3 inflammasome activation. The sequence is that of Free fatty acid receptor 1 (FFAR1) from Mesocricetus auratus (Golden hamster).